We begin with the raw amino-acid sequence, 208 residues long: Ribosomal RNA large subunit methyltransferase E (208 aa).

S-adenosyl-L-methionine-binding residues include G62, W64, D82, D98, and D123. Residue K163 is the Proton acceptor of the active site.

This sequence belongs to the class I-like SAM-binding methyltransferase superfamily. RNA methyltransferase RlmE family.

The protein localises to the cytoplasm. It catalyses the reaction uridine(2552) in 23S rRNA + S-adenosyl-L-methionine = 2'-O-methyluridine(2552) in 23S rRNA + S-adenosyl-L-homocysteine + H(+). Its function is as follows. Specifically methylates the uridine in position 2552 of 23S rRNA at the 2'-O position of the ribose in the fully assembled 50S ribosomal subunit. This Idiomarina loihiensis (strain ATCC BAA-735 / DSM 15497 / L2-TR) protein is Ribosomal RNA large subunit methyltransferase E.